The primary structure comprises 483 residues: Putative inorganic phosphate cotransporter (483 aa).

Transmembrane regions (helical) follow at residues 64-84 (YILSSFFYGYVITQIPFGILA), 90-110 (LRFLGYGMLINSVFAFLVPVA), 187-207 (IFYVFGIVGTVWSIAFLIFVY), 292-312 (LPYLAMWLLSMFISVIADWMI), 349-369 (ALTLAILTIGVGLNGGIYSGF), 383-403 (FLMSITNCSANLAGLLAPIAA), and 420-440 (IVFFIAAFVYIICGTFYNIFG). A disordered region spans residues 447-483 (WDNPSEDEQKPALESSSTTNPPRLSNGSSAPRAISSS). Residues 460–483 (ESSSTTNPPRLSNGSSAPRAISSS) are compositionally biased toward polar residues.

Belongs to the major facilitator superfamily. Sodium/anion cotransporter family.

The protein resides in the membrane. May be an inorganic phosphate cotransporter. This Drosophila ananassae (Fruit fly) protein is Putative inorganic phosphate cotransporter (Picot).